A 159-amino-acid chain; its full sequence is uncharacterized protein (159 aa).

Disordered regions lie at residues 1-29 and 114-159; these read MHQTHAIQRLEVLPSFSNESPTSRETSES and TRGG…NENT. A compositionally biased stretch (polar residues) spans 15-29; sequence SFSNESPTSRETSES.

This is an uncharacterized protein from Homo sapiens (Human).